We begin with the raw amino-acid sequence, 182 residues long: Epididymal-specific lipocalin-10 (182 aa).

The N-terminal stretch at 1 to 19 is a signal peptide; the sequence is MKLEMALSIALALAVVSWT. N-linked (GlcNAc...) asparagine glycosylation is found at Asn31 and Asn144. Cys85 and Cys176 are disulfide-bonded. Lys165 carries the N6-acetyllysine modification.

This sequence belongs to the calycin superfamily. Lipocalin family. In terms of tissue distribution, expressed in epididymis.

It is found in the secreted. May play a role in male fertility. May act as a retinoid carrier protein within the epididymis. In Mus musculus (Mouse), this protein is Epididymal-specific lipocalin-10 (Lcn10).